Reading from the N-terminus, the 166-residue chain is Olee1-like protein (166 aa).

A signal peptide spans 1 to 23; sequence MAKSIIIQAPALCFLSLLGFAYS. Disulfide bonds link cysteine 35–cysteine 106, cysteine 38–cysteine 150, and cysteine 59–cysteine 94.

This sequence belongs to the Ole e I family.

It is found in the secreted. The protein is Olee1-like protein of Betula pendula (European white birch).